Consider the following 130-residue polypeptide: Organic solute transporter subunit beta (130 aa).

The Extracellular segment spans residues M1–P35. Residues W36–G56 form a helical membrane-spanning segment. Residues R57–S130 lie on the Cytoplasmic side of the membrane. The segment at L99–S130 is disordered. Residues M110–D124 are compositionally biased toward basic and acidic residues.

It belongs to the OST-beta family. In terms of assembly, interacts with SLC51A. The Ost-alpha/Ost-beta complex is a heterodimer composed of alpha (SLC51A) and beta (SLC51B) subunit; induces the transport of SLC51A from the endoplasmic reticulum to the plasma membrane.

It localises to the cell membrane. It catalyses the reaction taurocholate(out) = taurocholate(in). The enzyme catalyses estrone 3-sulfate(out) = estrone 3-sulfate(in). It carries out the reaction dehydroepiandrosterone 3-sulfate(out) = dehydroepiandrosterone 3-sulfate(in). The catalysed reaction is tauroursodeoxycholate(out) = tauroursodeoxycholate(in). It catalyses the reaction glycoursodeoxycholate(out) = glycoursodeoxycholate(in). The enzyme catalyses glycocholate(out) = glycocholate(in). It carries out the reaction taurochenodeoxycholate(out) = taurochenodeoxycholate(in). The catalysed reaction is glycochenodeoxycholate(out) = glycochenodeoxycholate(in). It catalyses the reaction taurodeoxycholate(out) = taurodeoxycholate(in). The enzyme catalyses glycodeoxycholate(out) = glycodeoxycholate(in). It carries out the reaction prostaglandin E2(out) = prostaglandin E2(in). Functionally, essential component of the Ost-alpha/Ost-beta complex, a heterodimer that acts as the intestinal basolateral transporter responsible for bile acid export from enterocytes into portal blood. The Ost-alpha/Ost-beta complex efficiently transports the major species of bile acids (taurocholate). Taurine conjugates are transported more efficiently across the basolateral membrane than glycine-conjugated bile acids. Can also transport steroids such as estrone 3-sulfate and dehydroepiandrosterone 3-sulfate, therefore playing a role in the enterohepatic circulation of sterols. Able to transport eicosanoids such as prostaglandin E2. Modulates SLC51A glycosylation, membrane trafficking and stability activities. In Bos taurus (Bovine), this protein is Organic solute transporter subunit beta (SLC51B).